Consider the following 84-residue polypeptide: Putative membrane protein insertion efficiency factor (84 aa).

Belongs to the UPF0161 family.

Its subcellular location is the cell inner membrane. Its function is as follows. Could be involved in insertion of integral membrane proteins into the membrane. This chain is Putative membrane protein insertion efficiency factor, found in Shewanella halifaxensis (strain HAW-EB4).